Reading from the N-terminus, the 242-residue chain is Caffeoyl-CoA O-methyltransferase 2 (242 aa).

Lys16 contributes to the substrate binding site. S-adenosyl-L-methionine is bound by residues Thr58, Glu80, 82–83, Ser88, Asp106, and Ala135; that span reads GV. Asp158 lines the substrate pocket. Residue Asp158 participates in a divalent metal cation binding. Residue Asp160 participates in S-adenosyl-L-methionine binding. Positions 184 and 185 each coordinate a divalent metal cation. Asn189 serves as a coordination point for substrate.

The protein belongs to the class I-like SAM-binding methyltransferase superfamily. Cation-dependent O-methyltransferase family. CCoAMT subfamily. It depends on Mg(2+) as a cofactor. As to expression, mostly expressed in the bottom and middle parts of the stems.

It catalyses the reaction (E)-caffeoyl-CoA + S-adenosyl-L-methionine = (E)-feruloyl-CoA + S-adenosyl-L-homocysteine + H(+). It functions in the pathway aromatic compound metabolism; phenylpropanoid biosynthesis. Methylates caffeoyl-CoA to feruloyl-CoA and 5-hydroxyferuloyl-CoA to sinapoyl-CoA. Plays a role in the synthesis of feruloylated polysaccharides. Involved in the reinforcement of the plant cell wall. Also involved in the responding to wounding or pathogen challenge by the increased formation of cell wall-bound ferulic acid polymers. Methylates 5-hydroxyferulolyl-CoA more efficiently than caffeoyl-CoA. This is Caffeoyl-CoA O-methyltransferase 2 (CCOAOMT2) from Nicotiana tabacum (Common tobacco).